The sequence spans 907 residues: Protein translocase subunit SecA (907 aa).

Residues Gln87, Gly105–Thr109, and Asp510 contribute to the ATP site. The Zn(2+) site is built by Cys892, Cys894, Cys903, and His904.

It belongs to the SecA family. As to quaternary structure, monomer and homodimer. Part of the essential Sec protein translocation apparatus which comprises SecA, SecYEG and auxiliary proteins SecDF-YajC and YidC. Requires Zn(2+) as cofactor.

The protein resides in the cell inner membrane. The protein localises to the cytoplasm. It carries out the reaction ATP + H2O + cellular proteinSide 1 = ADP + phosphate + cellular proteinSide 2.. Part of the Sec protein translocase complex. Interacts with the SecYEG preprotein conducting channel. Has a central role in coupling the hydrolysis of ATP to the transfer of proteins into and across the cell membrane, serving both as a receptor for the preprotein-SecB complex and as an ATP-driven molecular motor driving the stepwise translocation of polypeptide chains across the membrane. The sequence is that of Protein translocase subunit SecA from Acinetobacter baumannii (strain ATCC 17978 / DSM 105126 / CIP 53.77 / LMG 1025 / NCDC KC755 / 5377).